A 312-amino-acid polypeptide reads, in one-letter code: Zinc transporter ZitB (312 aa).

Helical transmembrane passes span 21–41, 48–68, 90–110, 123–143, and 164–184; these read LLFAFIVTAGFMLLEVVGGIL, LADAGHMLTDAAALLFALLAV, AAFVNAIALVVITLLIVWEAI, LMMVIAVAGLLANLFAFWILH, and LLGSVGAIVAALIIIWTGWTP.

Belongs to the cation diffusion facilitator (CDF) transporter (TC 2.A.4) family. SLC30A subfamily.

Its subcellular location is the cell inner membrane. Its function is as follows. Involved in zinc efflux across the cytoplasmic membrane, thus reducing zinc accumulation in the cytoplasm and rendering bacteria more resistant to zinc. It may contribute to zinc homeostasis at low concentrations of zinc. The polypeptide is Zinc transporter ZitB (Salmonella typhimurium (strain LT2 / SGSC1412 / ATCC 700720)).